Consider the following 201-residue polypeptide: Large ribosomal subunit protein eL15A (201 aa).

The tract at residues 161-182 (SRGLTSIGKKSRGIGKGHRFNN) is disordered. The span at 169 to 179 (KKSRGIGKGHR) shows a compositional bias: basic residues.

It belongs to the eukaryotic ribosomal protein eL15 family. In terms of assembly, component of the large ribosomal subunit (LSU). Mature yeast ribosomes consist of a small (40S) and a large (60S) subunit. The 40S small subunit contains 1 molecule of ribosomal RNA (18S rRNA) and at least 33 different proteins. The large 60S subunit contains 3 rRNA molecules (25S, 5.8S and 5S rRNA) and at least 46 different proteins.

The protein resides in the cytoplasm. It is found in the nucleus. It localises to the nucleolus. Its function is as follows. Component of the ribosome, a large ribonucleoprotein complex responsible for the synthesis of proteins in the cell. The small ribosomal subunit (SSU) binds messenger RNAs (mRNAs) and translates the encoded message by selecting cognate aminoacyl-transfer RNA (tRNA) molecules. The large subunit (LSU) contains the ribosomal catalytic site termed the peptidyl transferase center (PTC), which catalyzes the formation of peptide bonds, thereby polymerizing the amino acids delivered by tRNAs into a polypeptide chain. The nascent polypeptides leave the ribosome through a tunnel in the LSU and interact with protein factors that function in enzymatic processing, targeting, and the membrane insertion of nascent chains at the exit of the ribosomal tunnel. In Schizosaccharomyces pombe (strain 972 / ATCC 24843) (Fission yeast), this protein is Large ribosomal subunit protein eL15A (rpl15).